An 879-amino-acid chain; its full sequence is MKQLSSAEVRQLFLDFFKEKGHTIEPSAPLVPNNDPTILWINSGVATMKKYFDGSVIPDNPRMANAQKSIRTNDIENVGKTARHHTFFEMLGNFSIGDYFKEGAIVFAWEFLTSPKWIGFDPDKLYVTVYPEDEEAKTLWREKIGLSDDHIVEIEDNFWDIGIGPSGPDSEIFYDRGPAFGDDASDPELYPGGENERYLEIWNLVFSQFNHNPDGTYTPLPKQNIDTGMGLERMVSIIQDAPTNFETDLFMPIIREVEQIAGVKYGHSQENDVAFKVIADHIRTVAFAIGDGALPSNEGRGYILRRLLRRAVRYAKVLTINEPFMYKLVPVVGKIMNSFYPEVENQTDFIQKVIRTEEERFHETLNEGLAILETILKTAKETNEQVIKGADIFKLYDTFGFPVELTEEYAEDHGLKVDHAGFEAEMKEQRARARAARADVKSMQVQGELLANLTEKSAFVGYNSTEHVSEILYLIQNDTLVDEVAAGNEAQVIFKETPFYAESGGQVADKGTIESETGLAYVEDVQKAPNKQNLHRISVKEGVLKTGDTVKLAVDKVKRRETIKNHTATHLLHRALKDTLGEHVNQAGSLVSPDRLRFDFSHFGQITEEELTKMEEIVNEKIWEQINVVIEEMPIAEAKELGAMALFGEKYGDIVRVVQVGKYSIELCGGVHVRNTADIGLFKIVSETGIGAGTRRIEAVTGKEAYRFVTEQENTLKQAASLLKTTTKETPQKVELLQADLREVKRENESLLSKLASAASADIFESPEEIGGVKVIAKQVNAKDMNQLRQFVDNWKDKKIGGILVLGAVQGDKVNLISAVSEEAIKAGYHAGKLLKEVATRCGGNGGGRPDMAQAGGKNPAELGTALDYVSTWVKEQQA.

Histidine 566, histidine 570, cysteine 668, and histidine 672 together coordinate Zn(2+).

It belongs to the class-II aminoacyl-tRNA synthetase family. It depends on Zn(2+) as a cofactor.

It localises to the cytoplasm. The catalysed reaction is tRNA(Ala) + L-alanine + ATP = L-alanyl-tRNA(Ala) + AMP + diphosphate. Its function is as follows. Catalyzes the attachment of alanine to tRNA(Ala) in a two-step reaction: alanine is first activated by ATP to form Ala-AMP and then transferred to the acceptor end of tRNA(Ala). Also edits incorrectly charged Ser-tRNA(Ala) and Gly-tRNA(Ala) via its editing domain. The chain is Alanine--tRNA ligase from Listeria monocytogenes serovar 1/2a (strain ATCC BAA-679 / EGD-e).